Here is a 317-residue protein sequence, read N- to C-terminus: Cytochrome f (317 aa).

Residues 1 to 34 (MKGLKNQIMKKTSLFICTLLFISSIVFHPKITFA) form the signal peptide. 4 residues coordinate heme: Tyr-35, Cys-55, Cys-58, and His-59. The helical transmembrane segment at 284-304 (VIGLIAFFIGVGLTQILLVLK) threads the bilayer.

Belongs to the cytochrome f family. The 4 large subunits of the cytochrome b6-f complex are cytochrome b6, subunit IV (17 kDa polypeptide, PetD), cytochrome f and the Rieske protein, while the 4 small subunits are PetG, PetL, PetM and PetN. The complex functions as a dimer. It depends on heme as a cofactor.

Its subcellular location is the cellular thylakoid membrane. Its function is as follows. Component of the cytochrome b6-f complex, which mediates electron transfer between photosystem II (PSII) and photosystem I (PSI), cyclic electron flow around PSI, and state transitions. The protein is Cytochrome f of Prochlorococcus marinus (strain MIT 9301).